We begin with the raw amino-acid sequence, 311 residues long: MSETLATPPAALHTWLSRWRQFSALTKPRVVQLIVFCAAIGMLLAVPGWPSLPAWGVALAASIGIWLVASAAAAFNCLVEQTIDSKMKRTAWRPTAKGELSNTQTLSFAVLLCAAGMAVLWVWVNALTMWLTFATFVGYAVIYTVLLKPATPQNIVIGGASGAMPPVLGWAAMRGELGAEPWILCLIIFLWTPPHFWALALYRAEDYARAGLPMLPVTHGNDFTRLQILLYTFVLFAATLLPFVYGMSGWFYLVAACALGVGFCGHAFRLWRHYSEALARRTFRFSIWHLSLLFAALLLDHYLGPLLRGTP.

The next 8 membrane-spanning stretches (helical) occupy residues 30-50, 55-75, 108-128, 129-149, 153-173, 182-202, 233-253, and 287-307; these read VVQL…PGWP, WGVA…AAAF, FAVL…NALT, MWLT…LLKP, QNIV…WAAM, WILC…LALY, FVLF…WFYL, and IWHL…GPLL.

Belongs to the UbiA prenyltransferase family. Protoheme IX farnesyltransferase subfamily.

The protein localises to the cell inner membrane. It carries out the reaction heme b + (2E,6E)-farnesyl diphosphate + H2O = Fe(II)-heme o + diphosphate. Its pathway is porphyrin-containing compound metabolism; heme O biosynthesis; heme O from protoheme: step 1/1. In terms of biological role, converts heme B (protoheme IX) to heme O by substitution of the vinyl group on carbon 2 of heme B porphyrin ring with a hydroxyethyl farnesyl side group. The polypeptide is Protoheme IX farnesyltransferase (Methylibium petroleiphilum (strain ATCC BAA-1232 / LMG 22953 / PM1)).